A 389-amino-acid chain; its full sequence is Probable family 17 glucosidase SCW10 (389 aa).

The first 18 residues, 1–18 (MRFSNFLTVSALLTGALG), serve as a signal peptide directing secretion. Residues 19–29 (APAVRHKHEKR) constitute a propeptide that is removed on maturation. The interval 70-134 (ASQATTSTLE…SSASSSISAS (65 aa)) is disordered. Asparagine 279 is a glycosylation site (N-linked (GlcNAc...) asparagine). Glutamate 326 acts as the Nucleophile in catalysis.

Belongs to the glycosyl hydrolase 17 family. In terms of processing, glycosylated.

It localises to the secreted. The protein localises to the cell wall. Functionally, glucanases possibly play a role in cell expansion during growth, in cell-cell fusion during mating, and in spore release during sporulation. This is Probable family 17 glucosidase SCW10 (SCW10) from Saccharomyces cerevisiae (strain ATCC 204508 / S288c) (Baker's yeast).